An 846-amino-acid chain; its full sequence is Translation initiation factor IF-2 (846 aa).

The disordered stretch occupies residues 198–219 (YKREEEEKKSKAKKAGGKGFKK). The segment covering 207 to 219 (SKAKKAGGKGFKK) has biased composition (basic residues). Residues 345–512 (SRAPVVTIMG…AVLLQSEVLE (168 aa)) form the tr-type G domain. The segment at 354-361 (GHVDHGKT) is G1. Residue 354-361 (GHVDHGKT) coordinates GTP. The tract at residues 379 to 383 (GITQH) is G2. Residues 400–403 (DTPG) are G3. GTP is bound by residues 400-404 (DTPGH) and 454-457 (NKID). Positions 454–457 (NKID) are G4. The G5 stretch occupies residues 490 to 492 (SAK).

Belongs to the TRAFAC class translation factor GTPase superfamily. Classic translation factor GTPase family. IF-2 subfamily.

It localises to the cytoplasm. In terms of biological role, one of the essential components for the initiation of protein synthesis. Protects formylmethionyl-tRNA from spontaneous hydrolysis and promotes its binding to the 30S ribosomal subunits. Also involved in the hydrolysis of GTP during the formation of the 70S ribosomal complex. The sequence is that of Translation initiation factor IF-2 from Francisella tularensis subsp. tularensis (strain SCHU S4 / Schu 4).